A 353-amino-acid chain; its full sequence is Dimethylsulfoniopropionate lyase 2 (353 aa).

Active-site proton donor/acceptor residues include cysteine 125 and cysteine 274. The tract at residues 326 to 353 (DPNETDVSKGRPTKAEHRFGPEFEEMLQ) is disordered. The span at 331–346 (DVSKGRPTKAEHRFGP) shows a compositional bias: basic and acidic residues.

Belongs to the aspartate/glutamate racemases family. ALMA1 subfamily. In terms of assembly, homotetramer.

The enzyme catalyses S,S-dimethyl-beta-propiothetin = acrylate + dimethyl sulfide + H(+). In terms of biological role, mediates cleavage of dimethylsulfoniopropionate (DMSP) into dimethyl sulfide (DMS) and acrylate. DMS is the principal form by which sulfur is transported from oceans to the atmosphere and is a key component of the ocean sulfur cycle. The protein is Dimethylsulfoniopropionate lyase 2 of Emiliania huxleyi (strain CCMP1516).